A 263-amino-acid polypeptide reads, in one-letter code: Undecaprenyl-diphosphatase 2 (263 aa).

8 helical membrane-spanning segments follow: residues 15–37 (GLTEFLPVSSTGHMILTGHLIGF), 42–62 (AKVFEVVIQLGSILAVVVIFW), 79–99 (SLNLLHIIIGMIPAGVLGVLF), 107–127 (LFGPGPVVISLVAGGILMIVA), 142–162 (ITYKQAFTIGMFQCLALWPGF), 183–203 (AEYTFILAVPMMVAASGLDLI), 216–236 (LFVTGFVTAFVVAMLAIVSFL), and 242–262 (VKLTPFAYYRFILAAVFYFFI).

It belongs to the UppP family.

The protein resides in the cell membrane. The enzyme catalyses di-trans,octa-cis-undecaprenyl diphosphate + H2O = di-trans,octa-cis-undecaprenyl phosphate + phosphate + H(+). Its function is as follows. Catalyzes the dephosphorylation of undecaprenyl diphosphate (UPP). Confers resistance to bacitracin. The sequence is that of Undecaprenyl-diphosphatase 2 from Bacillus cereus (strain ATCC 14579 / DSM 31 / CCUG 7414 / JCM 2152 / NBRC 15305 / NCIMB 9373 / NCTC 2599 / NRRL B-3711).